Reading from the N-terminus, the 389-residue chain is Acetyl-CoA:oxalate CoA-transferase (389 aa).

His237 is a catalytic residue.

In terms of assembly, homodimer.

The enzyme catalyses oxalate + acetyl-CoA = oxalyl-CoA + acetate. Its function is as follows. Involved in the catabolism of oxalate and in the adapatation to low pH. ACOCT serves to prime the oxalate-induced acid tolerance response (ATR) cycle by producing substrate for oxalyl-CoA decarboxylase (OXC) and formyl-coenzyme A transferase (FCOCT). Catalyzes the reversible conversion of acetyl-CoA and oxalate to oxalyl-CoA and acetate. It can also use formyl-CoA and oxalate to produce oxalyl-CoA and formate with significantly reduced specific activity. The chain is Acetyl-CoA:oxalate CoA-transferase (uctC) from Acetobacter aceti.